The following is a 91-amino-acid chain: Protein YchS (91 aa).

In Escherichia coli O157:H7, this protein is Protein YchS (ychS).